A 334-amino-acid chain; its full sequence is MTTYNLRLKAKDELTPHPSVQYWRKCQVEELFAMPFMELVFKAAQVHREHFDPQAIQLSTLLSIKTGGCPEECEYCPQSARYDTGLEKQVMLDIEEIVEKAKIAKQRGASRFCMGAAWRGPKPKDIKVVSEIIGAVKALGLETCGTFGLLEDGMAEDLKQAGLDYYNHNLDTDPERYSKVVHTRSHDDRMDTLGKVRHAGLKVCCGGIVGMNETRPERAGLIASLANLDPQPESVPINQLIKVEGTPMAEAEDLDWTEFVRTIAVARITMPKSYVRLSAGRTAMSEAMQTLCFIAGANSIFYGEKLLTTCNPEEDADCLLMQKLDLYPLQYQEC.

Residues 54-281 (QAIQLSTLLS…KSYVRLSAGR (228 aa)) form the Radical SAM core domain. [4Fe-4S] cluster-binding residues include Cys69, Cys73, and Cys76. 4 residues coordinate [2Fe-2S] cluster: Cys113, Cys144, Cys204, and Arg276.

It belongs to the radical SAM superfamily. Biotin synthase family. Homodimer. [4Fe-4S] cluster is required as a cofactor. It depends on [2Fe-2S] cluster as a cofactor.

It carries out the reaction (4R,5S)-dethiobiotin + (sulfur carrier)-SH + 2 reduced [2Fe-2S]-[ferredoxin] + 2 S-adenosyl-L-methionine = (sulfur carrier)-H + biotin + 2 5'-deoxyadenosine + 2 L-methionine + 2 oxidized [2Fe-2S]-[ferredoxin]. Its pathway is cofactor biosynthesis; biotin biosynthesis; biotin from 7,8-diaminononanoate: step 2/2. In terms of biological role, catalyzes the conversion of dethiobiotin (DTB) to biotin by the insertion of a sulfur atom into dethiobiotin via a radical-based mechanism. The protein is Biotin synthase of Haemophilus ducreyi (strain 35000HP / ATCC 700724).